Here is a 395-residue protein sequence, read N- to C-terminus: Na(+)/H(+) antiporter NhaA (395 aa).

The next 11 helical transmembrane spans lie at 11–31 (FQLE…ALII), 61–81 (LLLW…GLEV), 96–116 (IVLP…IYWF), 127–147 (GWAI…ALLG), 156–176 (LFLM…IAIF), 179–199 (GELS…LVAM), 215–237 (LILW…TLAF), 262–282 (VAYG…LSGV), 295–315 (IAVG…WLAV), 334–354 (VAIL…LAFV), and 366–386 (MGIL…TAAA).

Belongs to the NhaA Na(+)/H(+) (TC 2.A.33) antiporter family.

The protein resides in the cell inner membrane. The enzyme catalyses Na(+)(in) + 2 H(+)(out) = Na(+)(out) + 2 H(+)(in). In terms of biological role, na(+)/H(+) antiporter that extrudes sodium in exchange for external protons. The protein is Na(+)/H(+) antiporter NhaA of Pseudomonas fluorescens (strain Pf0-1).